A 327-amino-acid polypeptide reads, in one-letter code: GDP-mannose transporter (327 aa).

The Cytoplasmic segment spans residues 1–4 (MESS). Residues 5–25 (LAAIANSGPISIFSYCVSSIL) traverse the membrane as a helical segment. At 26–36 (MTVTNKYVLSG) the chain is on the lumenal side. A helical transmembrane segment spans residues 37–57 (FSFNMNFLLLAVQSIVCIVTI). At 58–78 (GSLKSFGVITYRQFNKEEARK) the chain is on the cytoplasmic side. Residues 79–93 (WSPIAVLLVIMIYTS) traverse the membrane as a helical segment. Residues 94–102 (SKALQYLSI) are Lumenal-facing. Residues 103 to 125 (PVYTIFKNLTIILIAYGEVLWFG) traverse the membrane as a helical segment. At 126 to 131 (GKVTTM) the chain is on the cytoplasmic side. The chain crosses the membrane as a helical span at residues 132–149 (ALSSFLLMVFSSVVAWYG). Residues 150 to 163 (DEAVSGSGNESFIA) lie on the Lumenal side of the membrane. Residue N158 is glycosylated (N-linked (GlcNAc...) asparagine). The helical transmembrane segment at 164–184 (LYLGYFWMATNCFASAAFVLI) threads the bilayer. At 185-207 (MRKRIKLTNFKDFDTMYYNNLLS) the chain is on the cytoplasmic side. Residues 208 to 228 (IPILLASSIIFEDWSAENLAV) form a helical membrane-spanning segment. The Lumenal portion of the chain corresponds to 229-238 (NFPSDNRTAT). Residue N234 is glycosylated (N-linked (GlcNAc...) asparagine). A helical membrane pass occupies residues 239 to 259 (IAAMVLSGASSVGISYCSAWC). Residues 260-266 (VRVTSST) are Cytoplasmic-facing. A helical membrane pass occupies residues 267-289 (TYSMVGALNKLPIALSGLVFFPA). Topologically, residues 290-292 (AVN) are lumenal. Residues 293–312 (FWSVASIFVGFAAGLVYAVA) form a helical membrane-spanning segment. Topologically, residues 313–327 (KQRQQKENVSLPSSK) are cytoplasmic.

This sequence belongs to the TPT transporter family. SLC35D subfamily. In terms of assembly, homooligomer.

Its subcellular location is the golgi apparatus membrane. The protein resides in the cytoplasmic vesicle membrane. The protein localises to the endoplasmic reticulum membrane. In terms of biological role, involved in the import of GDP-mannose from the cytoplasm into the Golgi lumen. The chain is GDP-mannose transporter (VRG4) from Scheffersomyces stipitis (strain ATCC 58785 / CBS 6054 / NBRC 10063 / NRRL Y-11545) (Yeast).